The primary structure comprises 260 residues: UPF0246 protein Bamb_2261 (260 aa).

The protein belongs to the UPF0246 family.

The polypeptide is UPF0246 protein Bamb_2261 (Burkholderia ambifaria (strain ATCC BAA-244 / DSM 16087 / CCUG 44356 / LMG 19182 / AMMD) (Burkholderia cepacia (strain AMMD))).